The primary structure comprises 357 residues: Sorbitol dehydrogenase (357 aa).

Alanine 2 is modified (N-acetylalanine). Zn(2+) is bound at residue cysteine 45. Substrate is bound at residue tyrosine 51. Histidine 70 and glutamate 71 together coordinate Zn(2+). Residue glutamate 156 coordinates substrate. Residues isoleucine 184, aspartate 204, and arginine 209 each contribute to the NAD(+) site. Phosphoserine occurs at positions 211 and 225. NAD(+) is bound by residues 273 to 275 and 297 to 299; these read VGL and VFR. The substrate site is built by arginine 299 and tyrosine 300.

Belongs to the zinc-containing alcohol dehydrogenase family. Homotetramer. The cofactor is Zn(2+). As to expression, expressed in liver. Expressed in kidney and epithelial cells of both benign and malignant prostate tissue. Expressed in epididymis (at protein level).

The protein resides in the mitochondrion membrane. Its subcellular location is the cell projection. It is found in the cilium. The protein localises to the flagellum. It carries out the reaction keto-D-fructose + NADH + H(+) = D-sorbitol + NAD(+). The catalysed reaction is L-threitol + NAD(+) = L-erythrulose + NADH + H(+). It catalyses the reaction xylitol + NAD(+) = D-xylulose + NADH + H(+). The enzyme catalyses ribitol + NAD(+) = D-ribulose + NADH + H(+). It carries out the reaction (R,R)-butane-2,3-diol + NAD(+) = (R)-acetoin + NADH + H(+). The catalysed reaction is L-iditol + NAD(+) = keto-L-sorbose + NADH + H(+). Its activity is regulated as follows. Inhibited by CP-166,572, an inhibitor that is competitive with fructose. Also competitively inhibited by phenanthroline and 4-methylpyrazole in vitro. In terms of biological role, polyol dehydrogenase that catalyzes the reversible NAD(+)-dependent oxidation of various sugar alcohols. Is mostly active with D-sorbitol (D-glucitol), L-threitol, xylitol and ribitol as substrates, leading to the C2-oxidized products D-fructose, L-erythrulose, D-xylulose, and D-ribulose, respectively. Is a key enzyme in the polyol pathway that interconverts glucose and fructose via sorbitol, which constitutes an important alternate route for glucose metabolism. The polyol pathway is believed to be involved in the etiology of diabetic complications, such as diabetic neuropathy and retinopathy, induced by hyperglycemia. May play a role in sperm motility by using sorbitol as an alternative energy source for sperm motility. May have a more general function in the metabolism of secondary alcohols since it also catalyzes the stereospecific oxidation of (2R,3R)-2,3-butanediol. To a lesser extent, can also oxidize L-arabinitol, galactitol and D-mannitol and glycerol in vitro. Oxidizes neither ethanol nor other primary alcohols. Cannot use NADP(+) as the electron acceptor. The polypeptide is Sorbitol dehydrogenase (SORD) (Homo sapiens (Human)).